A 196-amino-acid chain; its full sequence is Nodulation protein A (196 aa).

Belongs to the NodA family.

It localises to the cytoplasm. Its function is as follows. N-acyltransferase required for nodulation. Acts in the production of a small, heat-stable compound (Nod) that stimulates mitosis in various plant protoplasts. In Mesorhizobium sp. (strain 7653R), this protein is Nodulation protein A.